We begin with the raw amino-acid sequence, 199 residues long: Crossover junction endodeoxyribonuclease RuvC (199 aa).

Catalysis depends on residues Asp17, Glu76, and Asp148. Mg(2+) is bound by residues Asp17, Glu76, and Asp148.

The protein belongs to the RuvC family. Homodimer which binds Holliday junction (HJ) DNA. The HJ becomes 2-fold symmetrical on binding to RuvC with unstacked arms; it has a different conformation from HJ DNA in complex with RuvA. In the full resolvosome a probable DNA-RuvA(4)-RuvB(12)-RuvC(2) complex forms which resolves the HJ. Mg(2+) serves as cofactor.

It is found in the cytoplasm. It catalyses the reaction Endonucleolytic cleavage at a junction such as a reciprocal single-stranded crossover between two homologous DNA duplexes (Holliday junction).. In terms of biological role, the RuvA-RuvB-RuvC complex processes Holliday junction (HJ) DNA during genetic recombination and DNA repair. Endonuclease that resolves HJ intermediates. Cleaves cruciform DNA by making single-stranded nicks across the HJ at symmetrical positions within the homologous arms, yielding a 5'-phosphate and a 3'-hydroxyl group; requires a central core of homology in the junction. The consensus cleavage sequence is 5'-(A/T)TT(C/G)-3'. Cleavage occurs on the 3'-side of the TT dinucleotide at the point of strand exchange. HJ branch migration catalyzed by RuvA-RuvB allows RuvC to scan DNA until it finds its consensus sequence, where it cleaves and resolves the cruciform DNA. The polypeptide is Crossover junction endodeoxyribonuclease RuvC (Mannheimia succiniciproducens (strain KCTC 0769BP / MBEL55E)).